A 96-amino-acid polypeptide reads, in one-letter code: Iron-sulfur cluster assembly protein CyaY (96 aa).

Belongs to the frataxin family.

Its function is as follows. Involved in iron-sulfur (Fe-S) cluster assembly. May act as a regulator of Fe-S biogenesis. The chain is Iron-sulfur cluster assembly protein CyaY from Rickettsia bellii (strain RML369-C).